Consider the following 407-residue polypeptide: Protein FAM53B (407 aa).

2 disordered regions span residues 204-286 and 306-380; these read SSSM…RPSL and ITGE…DTEP. 2 stretches are compositionally biased toward basic and acidic residues: residues 264–281 and 327–339; these read LNEK…DTHK and DAVD…HNLK. The Nuclear localization signal motif lies at 272–275; sequence KRRR. The segment covering 357 to 369 has biased composition (acidic residues); that stretch reads ITEEVDWNCDDGT.

It belongs to the FAM53 family. In terms of assembly, interacts with ctnnb1. As to expression, predominantly expressed in proliferating cells throughout embryonic development.

The protein resides in the nucleus. In terms of biological role, acts as a regulator of Wnt signaling pathway by regulating beta-catenin (ctnnb1) nuclear localization. This is Protein FAM53B from Oryzias latipes (Japanese rice fish).